Consider the following 412-residue polypeptide: Argininosuccinate synthase (412 aa).

Residues 10–18 and alanine 36 contribute to the ATP site; that span reads AYSGGLDTS. L-citrulline is bound by residues tyrosine 87 and serine 92. Tyrosine 87 bears the Phosphotyrosine mark. N6-acetyllysine is present on lysine 112. Phosphotyrosine is present on tyrosine 113. 115–123 contributes to the ATP binding site; that stretch reads SHGATGKGN. L-aspartate contacts are provided by threonine 119, asparagine 123, and aspartate 124. Asparagine 123 lines the L-citrulline pocket. Arginine 127 contributes to the L-citrulline binding site. 2 positions are modified to N6-acetyllysine; by CLOCK: lysine 165 and lysine 176. A phosphoserine mark is found at serine 177 and serine 180. Serine 180 and serine 189 together coordinate L-citrulline. Position 219 is a phosphothreonine (threonine 219). Residues glutamate 270 and tyrosine 282 each contribute to the L-citrulline site.

The protein belongs to the argininosuccinate synthase family. Type 1 subfamily. As to quaternary structure, homotetramer. Interacts with NMRAL1. Interacts with CLOCK; in a circadian manner. Forms tissue-specific complexes with ASL, SLC7A1, HSP90AA1 and nitric oxide synthase NOS1, NOS2 or NOS3; the complex regulates cell-autonomous L-arginine synthesis and citrulline recycling while channeling extracellular L-arginine to nitric oxide synthesis pathway. Acetylated by CLOCK in a circadian manner which negatively regulates its enzyme activity. Deacetylated by histone deacetylases.

The protein localises to the cytoplasm. It is found in the cytosol. The enzyme catalyses L-citrulline + L-aspartate + ATP = 2-(N(omega)-L-arginino)succinate + AMP + diphosphate + H(+). It functions in the pathway amino-acid biosynthesis; L-arginine biosynthesis; L-arginine from L-ornithine and carbamoyl phosphate: step 2/3. Its pathway is nitrogen metabolism; urea cycle; (N(omega)-L-arginino)succinate from L-aspartate and L-citrulline: step 1/1. Functionally, one of the enzymes of the urea cycle, the metabolic pathway transforming neurotoxic amonia produced by protein catabolism into inocuous urea in the liver of ureotelic animals. Catalyzes the formation of arginosuccinate from aspartate, citrulline and ATP and together with ASL it is responsible for the biosynthesis of arginine in most body tissues. Indirectly, may be involved in the control of blood pressure. In Rattus norvegicus (Rat), this protein is Argininosuccinate synthase.